Consider the following 143-residue polypeptide: MADSKELAEQREETRLIIEELLEDGSDPDALYAIEHHISCENFETLEKAAVEVFKLGYEVTEPEEIEIESGEILVCFDAVSESGLNAELIDAQVEQLMNLAEKMGVYYDGWGTYFEDPDAEYDDEDGENEDDESESDKSSRLH.

Residues 117–135 are compositionally biased toward acidic residues; sequence DPDAEYDDEDGENEDDESE. Positions 117–143 are disordered; that stretch reads DPDAEYDDEDGENEDDESESDKSSRLH.

It belongs to the RraB family. As to quaternary structure, interacts with the C-terminal region of Rne.

Its subcellular location is the cytoplasm. Its function is as follows. Globally modulates RNA abundance by binding to RNase E (Rne) and regulating its endonucleolytic activity. Can modulate Rne action in a substrate-dependent manner by altering the composition of the degradosome. This chain is Regulator of ribonuclease activity B, found in Proteus mirabilis (strain HI4320).